A 434-amino-acid polypeptide reads, in one-letter code: uncharacterized protein (434 aa).

Lys-216 bears the N6-(pyridoxal phosphate)lysine mark.

This is an uncharacterized protein from Schizosaccharomyces pombe (strain 972 / ATCC 24843) (Fission yeast).